We begin with the raw amino-acid sequence, 288 residues long: 33 kDa chaperonin (288 aa).

2 disulfides stabilise this stretch: C236/C238 and C269/C272.

This sequence belongs to the HSP33 family. In terms of processing, under oxidizing conditions two disulfide bonds are formed involving the reactive cysteines. Under reducing conditions zinc is bound to the reactive cysteines and the protein is inactive.

The protein localises to the cytoplasm. In terms of biological role, redox regulated molecular chaperone. Protects both thermally unfolding and oxidatively damaged proteins from irreversible aggregation. Plays an important role in the bacterial defense system toward oxidative stress. The polypeptide is 33 kDa chaperonin (Syntrophotalea carbinolica (strain DSM 2380 / NBRC 103641 / GraBd1) (Pelobacter carbinolicus)).